The sequence spans 255 residues: uncharacterized protein (255 aa).

The first 23 residues, 1–23 (MKRLNKLVLGIIFLFLVISITAG), serve as a signal peptide directing secretion. A lipid anchor (N-palmitoyl cysteine) is attached at Cys-24. Cys-24 carries the S-diacylglycerol cysteine lipid modification.

It belongs to the staphylococcal tandem lipoprotein family.

The protein resides in the cell membrane. This is an uncharacterized protein from Staphylococcus aureus (strain Mu50 / ATCC 700699).